Consider the following 357-residue polypeptide: 3-dehydroquinate synthase (357 aa).

Residues 99-103 (GATGD), 123-124 (TT), K135, K144, and 162-165 (FLET) contribute to the NAD(+) site. 3 residues coordinate Zn(2+): E177, H247, and H261.

It belongs to the sugar phosphate cyclases superfamily. Dehydroquinate synthase family. Co(2+) serves as cofactor. It depends on Zn(2+) as a cofactor. Requires NAD(+) as cofactor.

It is found in the cytoplasm. It carries out the reaction 7-phospho-2-dehydro-3-deoxy-D-arabino-heptonate = 3-dehydroquinate + phosphate. It functions in the pathway metabolic intermediate biosynthesis; chorismate biosynthesis; chorismate from D-erythrose 4-phosphate and phosphoenolpyruvate: step 2/7. Functionally, catalyzes the conversion of 3-deoxy-D-arabino-heptulosonate 7-phosphate (DAHP) to dehydroquinate (DHQ). This Macrococcus caseolyticus (strain JCSC5402) (Macrococcoides caseolyticum) protein is 3-dehydroquinate synthase.